We begin with the raw amino-acid sequence, 90 residues long: Phosphocarrier protein NPr (90 aa).

One can recognise an HPr domain in the interval 2–90 (TVKQTVEITN…ALFNSGFDED (89 aa)). The active-site Pros-phosphohistidine intermediate is the His16.

Belongs to the HPr family.

It is found in the cytoplasm. Component of the phosphoenolpyruvate-dependent nitrogen-metabolic phosphotransferase system (nitrogen-metabolic PTS), that seems to be involved in regulating nitrogen metabolism. The phosphoryl group from phosphoenolpyruvate (PEP) is transferred to the phosphoryl carrier protein NPr by enzyme I-Ntr. Phospho-NPr then transfers it to EIIA-Ntr. Could function in the transcriptional regulation of sigma-54 dependent operons in conjunction with the NPr (PtsO) and EIIA-Ntr (PtsN) proteins. This is Phosphocarrier protein NPr (ptsO) from Escherichia coli O157:H7.